A 193-amino-acid polypeptide reads, in one-letter code: Shikimate kinase (193 aa).

Residue 31 to 36 (GVGKTT) participates in ATP binding. Threonine 35 provides a ligand contact to Mg(2+). 3 residues coordinate substrate: aspartate 53, arginine 77, and glycine 103. Residue arginine 141 participates in ATP binding. Residue arginine 160 participates in substrate binding. Glutamine 176 serves as a coordination point for ATP.

This sequence belongs to the shikimate kinase family. As to quaternary structure, monomer. Requires Mg(2+) as cofactor.

The protein localises to the cytoplasm. The catalysed reaction is shikimate + ATP = 3-phosphoshikimate + ADP + H(+). It functions in the pathway metabolic intermediate biosynthesis; chorismate biosynthesis; chorismate from D-erythrose 4-phosphate and phosphoenolpyruvate: step 5/7. Functionally, catalyzes the specific phosphorylation of the 3-hydroxyl group of shikimic acid using ATP as a cosubstrate. This chain is Shikimate kinase, found in Novosphingobium aromaticivorans (strain ATCC 700278 / DSM 12444 / CCUG 56034 / CIP 105152 / NBRC 16084 / F199).